The primary structure comprises 259 residues: Dihydroorotate dehydrogenase B (NAD(+)), electron transfer subunit (259 aa).

The region spanning 2 to 102 is the FAD-binding FR-type domain; sequence MQKQNMIVVN…LGPLGHGFPV (101 aa). FAD is bound by residues 53–56, 70–72, and 77–78; these read RPIS, LYR, and GT. Residues Cys-221, Cys-226, Cys-229, and Cys-246 each contribute to the [2Fe-2S] cluster site.

This sequence belongs to the PyrK family. Heterotetramer of 2 PyrK and 2 PyrD type B subunits. [2Fe-2S] cluster is required as a cofactor. Requires FAD as cofactor.

It functions in the pathway pyrimidine metabolism; UMP biosynthesis via de novo pathway; orotate from (S)-dihydroorotate (NAD(+) route): step 1/1. Its function is as follows. Responsible for channeling the electrons from the oxidation of dihydroorotate from the FMN redox center in the PyrD type B subunit to the ultimate electron acceptor NAD(+). This chain is Dihydroorotate dehydrogenase B (NAD(+)), electron transfer subunit, found in Bacillus cereus (strain G9842).